An 816-amino-acid polypeptide reads, in one-letter code: Transcription factor qa-1f (816 aa).

A DNA-binding region (zn(2)-C6 fungal-type) is located at residues 76 to 103; that stretch reads CDQCRAAREKCDGIQPACFPCVSQGRSC. Polar residues predominate over residues 184-202; it reads SGQAAQDPSEDGQSPSEDI. The interval 184–235 is disordered; that stretch reads SGQAAQDPSEDGQSPSEDINVQDAGAKTSDFPHAPHLTFSAPKSSTAETRTL.

It localises to the nucleus. Transcription activator; part of the qa gene cluster that mediates the catabolism of quinic acid (QA) and as such, allows the use of QA as a sole carbon source. Activates the expression of qa cluster genes by binding to a 16 base-pair consensus sequence 5'-GGRTAARYRYTTAYCC-3' present in the promoters of the target genes. Regulates its own expression. May regulate the expression of many other genes inclusing genes with products in 8 mutually connected metabolic pathways: (1) starch and sucrose metabolism; (2) glycolysis/glucanogenesis; (3) TCA Cycle; (4) butanoate metabolism; (5) pyruvate metabolism; (6) aromatic amino acid and QA metabolism; (7) valine, leucine, and isoleucine degradation; and (8) transport of sugars and amino acids. This Neurospora crassa (strain ATCC 24698 / 74-OR23-1A / CBS 708.71 / DSM 1257 / FGSC 987) protein is Transcription factor qa-1f.